Here is a 246-residue protein sequence, read N- to C-terminus: NAD-dependent protein deacylase (246 aa).

The 245-residue stretch at 1–245 (MKEFITKHRD…ELIREILDNP (245 aa)) folds into the Deacetylase sirtuin-type domain. 20–39 (GAGISAESGIPTFRGSEGLW) contributes to the NAD(+) binding site. Tyr64 and Arg67 together coordinate substrate. 98 to 101 (QNVD) provides a ligand contact to NAD(+). His116 functions as the Proton acceptor in the catalytic mechanism. Residues Cys124, Cys127, Cys146, and Cys149 each contribute to the Zn(2+) site. NAD(+) is bound by residues 186-188 (GTS), 212-214 (NPE), and Thr230.

Belongs to the sirtuin family. Class III subfamily. Zn(2+) serves as cofactor.

The protein localises to the cytoplasm. The catalysed reaction is N(6)-acetyl-L-lysyl-[protein] + NAD(+) + H2O = 2''-O-acetyl-ADP-D-ribose + nicotinamide + L-lysyl-[protein]. The enzyme catalyses N(6)-succinyl-L-lysyl-[protein] + NAD(+) + H2O = 2''-O-succinyl-ADP-D-ribose + nicotinamide + L-lysyl-[protein]. In terms of biological role, NAD-dependent lysine deacetylase and desuccinylase that specifically removes acetyl and succinyl groups on target proteins. Modulates the activities of several proteins which are inactive in their acylated form. The chain is NAD-dependent protein deacylase from Leptospira interrogans serogroup Icterohaemorrhagiae serovar Lai (strain 56601).